The sequence spans 146 residues: Angiogenin (146 aa).

An N-terminal signal peptide occupies residues 1–24; that stretch reads MVMGLHLLFLVFILGLGLTPPTLA. Pyrrolidone carboxylic acid is present on Gln-25. His-37 (proton acceptor) is an active-site residue. Cystine bridges form between Cys-50–Cys-105, Cys-63–Cys-116, and Cys-81–Cys-131. Residues 55-59 carry the Nucleolar localization signal motif; sequence RLRNM. Residues Cys-105 and Val-127 each contribute to the tRNA site. His-138 functions as the Proton donor in the catalytic mechanism.

It belongs to the pancreatic ribonuclease family. As to quaternary structure, homodimer. Interacts with RNH1; inhibiting ANG ribonuclease activity. Interacts with PCNA.

It is found in the secreted. Its subcellular location is the nucleus. The protein resides in the nucleolus. The protein localises to the cytoplasm. It localises to the stress granule. Has weak tRNA ribonuclease activity by itself due to partial autoinhibition by its C-terminus, which folds into a short alpha-helix that partially occludes the substrate-binding site. In absence of stress, the ribonuclease activity is inhibited by RNH1 in the cytoplasm. In response to stress, dissociates from RNH1 in the cytoplasm and associates with cytoplasmic ribosomes with vacant A-sites: ribosomes directly activate the tRNA ribonuclease activity of ANG by refolding the C-terminal alpha-helix. In response to stress, the angiogenic activity of ANG is inhibited by RNH1 in the nucleus. Functionally, secreted ribonuclease that can either promote or restrict cell proliferation of target cells, depending on the context. Endocytosed in target cells via its receptor PLXNB2 and translocates to the cytoplasm or nucleus. Under stress conditions, localizes to the cytoplasm and promotes the assembly of stress granules (SGs): specifically cleaves a subset of tRNAs within anticodon loops to produce tRNA-derived stress-induced fragments (tiRNAs), resulting in translation repression and inhibition of cell proliferation. tiRNas also prevent formation of apoptosome, thereby promoting cell survival. Preferentially cleaves RNAs between a pyrimidine and an adenosine residue, suggesting that it cleaves the anticodon loop of tRNA(Ala) (32-UUAGCAU-38) after positions 33 and 36. Cleaves a subset of tRNAs, including tRNA(Ala), tRNA(Glu), tRNA(Gly), tRNA(Lys), tRNA(Val), tRNA(His), tRNA(Asp) and tRNA(Sec). Under growth conditions and in differentiated cells, translocates to the nucleus and stimulates ribosomal RNA (rRNA) transcription, including that containing the initiation site sequences of 45S rRNA, thereby promoting cell growth and proliferation. Angiogenin induces vascularization of normal and malignant tissues via its ability to promote rRNA transcription. Involved in hematopoietic stem and progenitor cell (HSPC) growth and survival by promoting rRNA transcription in growth conditions and inhibiting translation in response to stress, respectively. Mediates the crosstalk between myeloid and intestinal epithelial cells to protect the intestinal epithelial barrier integrity: secreted by myeloid cells and promotes intestinal epithelial cells proliferation and survival. Also mediates osteoclast-endothelial cell crosstalk in growing bone: produced by osteoclasts and protects the neighboring vascular cells against senescence by promoting rRNA transcription. This is Angiogenin (ANG) from Saguinus oedipus (Cotton-top tamarin).